We begin with the raw amino-acid sequence, 134 residues long: Profilin-3 (134 aa).

Cysteines 13 and 118 form a disulfide. The short motif at Ala-84–Thr-100 is the Involved in PIP2 interaction element. Thr-114 is subject to Phosphothreonine.

It belongs to the profilin family. In terms of assembly, occurs in many kinds of cells as a complex with monomeric actin in a 1:1 ratio. Post-translationally, phosphorylated by MAP kinases.

It is found in the cytoplasm. Its subcellular location is the cytoskeleton. Its function is as follows. Binds to actin and affects the structure of the cytoskeleton. At high concentrations, profilin prevents the polymerization of actin, whereas it enhances it at low concentrations. The sequence is that of Profilin-3 from Olea europaea (Common olive).